A 483-amino-acid polypeptide reads, in one-letter code: Glutamyl-tRNA(Gln) amidotransferase subunit A (483 aa).

Residues lysine 76 and serine 151 each act as charge relay system in the active site. Serine 175 acts as the Acyl-ester intermediate in catalysis.

This sequence belongs to the amidase family. GatA subfamily. As to quaternary structure, heterotrimer of A, B and C subunits.

The enzyme catalyses L-glutamyl-tRNA(Gln) + L-glutamine + ATP + H2O = L-glutaminyl-tRNA(Gln) + L-glutamate + ADP + phosphate + H(+). Functionally, allows the formation of correctly charged Gln-tRNA(Gln) through the transamidation of misacylated Glu-tRNA(Gln) in organisms which lack glutaminyl-tRNA synthetase. The reaction takes place in the presence of glutamine and ATP through an activated gamma-phospho-Glu-tRNA(Gln). The chain is Glutamyl-tRNA(Gln) amidotransferase subunit A from Pseudomonas fluorescens (strain SBW25).